Reading from the N-terminus, the 175-residue chain is Translation initiation factor IF-3 (175 aa).

This sequence belongs to the IF-3 family. In terms of assembly, monomer.

The protein resides in the cytoplasm. IF-3 binds to the 30S ribosomal subunit and shifts the equilibrium between 70S ribosomes and their 50S and 30S subunits in favor of the free subunits, thus enhancing the availability of 30S subunits on which protein synthesis initiation begins. This chain is Translation initiation factor IF-3, found in Blochmanniella floridana.